A 1013-amino-acid polypeptide reads, in one-letter code: EF-hand calcium-binding domain-containing protein 6 (1013 aa).

EF-hand domains are found at residues 20–55 (KNIKTVMKAFKLIDVNKTGLVRPQELRRVLETFCLK), 145–180 (KSYEKIEKALSAGDPCKGGYVSFNYLKIVLDTFIYQ), 251–286 (DRSASLKKALLIINTKPDGPITREEFRYILNCVAIK), 287–322 (LSDSEFKELMQILDPGDTGVVNTSMFIDLIEENCRM), and 352–387 (RNLQAFYNMLRSYDLGDTGLIGRNNFKKIMHVFCPF). A disordered region spans residues 441 to 460 (QKDEQQQPDLSERTKPTEDK). EF-hand domains follow at residues 482-517 (QQDPAFKKRFLDFSKEPNGKINVHDFRKILEDTGMP), 589-624 (ESFRDPYSAFFKTDVDRDGIINMHDLHRLLLHLLLN), 695-730 (NRWSDLSKNFLETDNEGNGILRRRDIKNALYGFDIP), 731-766 (LTPREFEKLWARYNTEGKGHITYQEFLQKLGINYSP), 812-847 (DLHQDISKAFTKIDKSKTNYISICKMQKVLEECGCS), and 917-952 (SSQLALSTAFSALDKEDTGFVKATEFGQVLKDFCYK). 4 residues coordinate Ca(2+): Asp-602, Asp-604, Asp-606, and Asp-613. At Thr-732 the chain carries Phosphothreonine.

In terms of assembly, microtubule inner protein component of sperm flagellar doublet microtubules. Binds PARK7. Part of a ternary complex containing PARK7, EFCAB6/DJBP and AR.

It localises to the nucleus. Its subcellular location is the cytoplasm. The protein localises to the cytoskeleton. The protein resides in the flagellum axoneme. In terms of biological role, negatively regulates the androgen receptor by recruiting histone deacetylase complex, and protein DJ-1 antagonizes this inhibition by abrogation of this complex. Microtubule inner protein (MIP) part of the dynein-decorated doublet microtubules (DMTs) in cilia axoneme, which is required for motile cilia beating. This is EF-hand calcium-binding domain-containing protein 6 (EFCAB6) from Pongo abelii (Sumatran orangutan).